A 440-amino-acid polypeptide reads, in one-letter code: 23S rRNA (uracil(1939)-C(5))-methyltransferase RlmD (440 aa).

One can recognise a TRAM domain in the interval 6-64 (PIHNAQPEQVFIESLDTEGRGIARVEGKVLFVDGALPGERVWARRTQNHKSFDRAELLQ). The [4Fe-4S] cluster site is built by C77, C83, C86, and C164. The S-adenosyl-L-methionine site is built by Q273, F302, N307, E323, D351, and D372. C397 acts as the Nucleophile in catalysis.

Belongs to the class I-like SAM-binding methyltransferase superfamily. RNA M5U methyltransferase family. RlmD subfamily.

It catalyses the reaction uridine(1939) in 23S rRNA + S-adenosyl-L-methionine = 5-methyluridine(1939) in 23S rRNA + S-adenosyl-L-homocysteine + H(+). Functionally, catalyzes the formation of 5-methyl-uridine at position 1939 (m5U1939) in 23S rRNA. In Acidithiobacillus ferrooxidans (strain ATCC 23270 / DSM 14882 / CIP 104768 / NCIMB 8455) (Ferrobacillus ferrooxidans (strain ATCC 23270)), this protein is 23S rRNA (uracil(1939)-C(5))-methyltransferase RlmD.